A 301-amino-acid chain; its full sequence is Cilia- and flagella-associated protein 161 (301 aa).

It localises to the cytoplasm. Its subcellular location is the cytoskeleton. The protein localises to the cilium axoneme. Microtubule inner protein (MIP) part of the dynein-decorated doublet microtubules (DMTs) in cilia axoneme, which is required for motile cilia beating. This is Cilia- and flagella-associated protein 161 from Danio rerio (Zebrafish).